A 329-amino-acid chain; its full sequence is uncharacterized protein (329 aa).

10 helical membrane passes run 9 to 29 (LMGLLIVLLAAIFFCFHNVIV), 53 to 73 (SHSFLLLLLRMLWVVPLMALI), 105 to 125 (FLMFLYLVLLYISISFIPTGI), 126 to 146 (AITLFFTYPIFTALLAWRLFN), 154 to 174 (WLVIGLTLIGTFLTIPYAYGG), 179 to 199 (LVLGVSTGIASGIVYAGYTVF), 210 to 230 (VPFTWISFATTLILSILCLII), 240 to 260 (WLAITIGSLLSALFTLAGHVL), 273 to 293 (AAIIGATNPALTVVLAGLAIQ), and 296 to 316 (LTNIQIFGVCLVTFSIALLNY). EamA domains lie at 103-169 (CGFL…LTIP) and 191-316 (IVYA…LLNY).

This sequence belongs to the EamA transporter family.

The protein resides in the cell membrane. This is an uncharacterized protein from Synechocystis sp. (strain ATCC 27184 / PCC 6803 / Kazusa).